The sequence spans 236 residues: Small ribosomal subunit protein uS3 (236 aa).

Residues 39–107 enclose the KH type-2 domain; it reads IRSYVLEELR…ETSLNIVEIR (69 aa). The interval 214–236 is disordered; sequence ASERRATEADQSGSSSNRRRENA.

The protein belongs to the universal ribosomal protein uS3 family. In terms of assembly, part of the 30S ribosomal subunit. Forms a tight complex with proteins S10 and S14.

Functionally, binds the lower part of the 30S subunit head. Binds mRNA in the 70S ribosome, positioning it for translation. The polypeptide is Small ribosomal subunit protein uS3 (Bartonella tribocorum (strain CIP 105476 / IBS 506)).